The primary structure comprises 395 residues: S-adenosylmethionine synthase (395 aa).

Histidine 16 provides a ligand contact to ATP. Aspartate 18 contacts Mg(2+). Glutamate 44 lines the K(+) pocket. L-methionine-binding residues include glutamate 57 and glutamine 100. The segment at glutamine 100–leucine 110 is flexible loop. Residues aspartate 175 to lysine 177, arginine 242 to phenylalanine 243, aspartate 251, arginine 257 to lysine 258, alanine 274, and lysine 278 contribute to the ATP site. Aspartate 251 contacts L-methionine. Position 282 (lysine 282) interacts with L-methionine.

It belongs to the AdoMet synthase family. Homotetramer; dimer of dimers. Requires Mg(2+) as cofactor. K(+) is required as a cofactor.

The protein resides in the cytoplasm. The enzyme catalyses L-methionine + ATP + H2O = S-adenosyl-L-methionine + phosphate + diphosphate. It functions in the pathway amino-acid biosynthesis; S-adenosyl-L-methionine biosynthesis; S-adenosyl-L-methionine from L-methionine: step 1/1. Catalyzes the formation of S-adenosylmethionine (AdoMet) from methionine and ATP. The overall synthetic reaction is composed of two sequential steps, AdoMet formation and the subsequent tripolyphosphate hydrolysis which occurs prior to release of AdoMet from the enzyme. The chain is S-adenosylmethionine synthase from Thermus thermophilus (strain ATCC BAA-163 / DSM 7039 / HB27).